Here is a 321-residue protein sequence, read N- to C-terminus: Glucokinase (321 aa).

8–13 (GDVGGT) lines the ATP pocket.

Belongs to the bacterial glucokinase family.

The protein localises to the cytoplasm. The catalysed reaction is D-glucose + ATP = D-glucose 6-phosphate + ADP + H(+). The polypeptide is Glucokinase (Salmonella heidelberg (strain SL476)).